The chain runs to 474 residues: Uronate isomerase (474 aa).

It belongs to the metallo-dependent hydrolases superfamily. Uronate isomerase family.

It catalyses the reaction D-glucuronate = D-fructuronate. The catalysed reaction is aldehydo-D-galacturonate = keto-D-tagaturonate. It functions in the pathway carbohydrate metabolism; pentose and glucuronate interconversion. The chain is Uronate isomerase from Photorhabdus laumondii subsp. laumondii (strain DSM 15139 / CIP 105565 / TT01) (Photorhabdus luminescens subsp. laumondii).